The following is a 433-amino-acid chain: Probable RNA 3'-terminal phosphate cyclase (433 aa).

The span at 1-10 (MGKNKNYNKN) shows a compositional bias: low complexity. The interval 1–28 (MGKNKNYNKNQFKKSKTNNDTTVAQQQQ) is disordered. Residues 18-28 (NNDTTVAQQQQ) are compositionally biased toward polar residues. ATP is bound by residues glutamine 137 and 328-332 (YLQDQ). Residue histidine 354 is the Tele-AMP-histidine intermediate of the active site. The interval 400-433 (LNNNNNNSNSNTTTTTTTTTISTTTIDNQNSEEK) is disordered. Positions 401 to 425 (NNNNNNSNSNTTTTTTTTTISTTTI) are enriched in low complexity.

The protein belongs to the RNA 3'-terminal cyclase family. Type 1 subfamily.

The protein localises to the nucleus. Its subcellular location is the nucleoplasm. The enzyme catalyses a 3'-end 3'-phospho-ribonucleotide-RNA + ATP = a 3'-end 2',3'-cyclophospho-ribonucleotide-RNA + AMP + diphosphate. Catalyzes the conversion of 3'-phosphate to a 2',3'-cyclic phosphodiester at the end of RNA. The mechanism of action of the enzyme occurs in 3 steps: (A) adenylation of the enzyme by ATP; (B) transfer of adenylate to an RNA-N3'P to produce RNA-N3'PP5'A; (C) and attack of the adjacent 2'-hydroxyl on the 3'-phosphorus in the diester linkage to produce the cyclic end product. The biological role of this enzyme is unknown but it is likely to function in some aspects of cellular RNA processing. The protein is Probable RNA 3'-terminal phosphate cyclase (rtca) of Dictyostelium discoideum (Social amoeba).